The following is a 444-amino-acid chain: UDP-N-acetylmuramate--L-alanine ligase (444 aa).

Residue Gly-110 to Ser-116 coordinates ATP.

Belongs to the MurCDEF family.

The protein localises to the cytoplasm. It carries out the reaction UDP-N-acetyl-alpha-D-muramate + L-alanine + ATP = UDP-N-acetyl-alpha-D-muramoyl-L-alanine + ADP + phosphate + H(+). Its pathway is cell wall biogenesis; peptidoglycan biosynthesis. Its function is as follows. Cell wall formation. This is UDP-N-acetylmuramate--L-alanine ligase from Streptococcus pneumoniae (strain JJA).